A 466-amino-acid chain; its full sequence is 3-isopropylmalate dehydratase large subunit (466 aa).

[4Fe-4S] cluster contacts are provided by cysteine 347, cysteine 407, and cysteine 410.

This sequence belongs to the aconitase/IPM isomerase family. LeuC type 1 subfamily. Heterodimer of LeuC and LeuD. [4Fe-4S] cluster serves as cofactor.

The enzyme catalyses (2R,3S)-3-isopropylmalate = (2S)-2-isopropylmalate. It functions in the pathway amino-acid biosynthesis; L-leucine biosynthesis; L-leucine from 3-methyl-2-oxobutanoate: step 2/4. Functionally, catalyzes the isomerization between 2-isopropylmalate and 3-isopropylmalate, via the formation of 2-isopropylmaleate. This chain is 3-isopropylmalate dehydratase large subunit, found in Shigella sonnei (strain Ss046).